Reading from the N-terminus, the 99-residue chain is Small ribosomal subunit protein eS24 (99 aa).

It belongs to the eukaryotic ribosomal protein eS24 family.

The chain is Small ribosomal subunit protein eS24 from Pyrococcus horikoshii (strain ATCC 700860 / DSM 12428 / JCM 9974 / NBRC 100139 / OT-3).